Reading from the N-terminus, the 772-residue chain is NAD(P)H-quinone oxidoreductase subunit 5, chloroplastic (772 aa).

Transmembrane regions (helical) follow at residues 9–29 (WIIP…LLLF), 40–60 (WSFP…YLSI), 89–109 (IDPL…LVLF), 125–145 (FAYL…SNLI), 147–167 (IYIF…FWFT), 185–205 (GDFG…SFEF), 220–240 (NQVH…GAVA), 259–279 (TPIS…FLVA), 290–312 (YIMN…LALA), 328–348 (LGYM…FHLI), 355–375 (ALLF…VGYS), 397–417 (TAFL…CFWS), 426–446 (WLYS…TAFY), 550–570 (LFSL…GIPF), 604–624 (FVTN…IATF), and 731–751 (IFIF…FFVL).

Belongs to the complex I subunit 5 family. As to quaternary structure, NDH is composed of at least 16 different subunits, 5 of which are encoded in the nucleus.

It localises to the plastid. The protein localises to the chloroplast thylakoid membrane. It catalyses the reaction a plastoquinone + NADH + (n+1) H(+)(in) = a plastoquinol + NAD(+) + n H(+)(out). The catalysed reaction is a plastoquinone + NADPH + (n+1) H(+)(in) = a plastoquinol + NADP(+) + n H(+)(out). NDH shuttles electrons from NAD(P)H:plastoquinone, via FMN and iron-sulfur (Fe-S) centers, to quinones in the photosynthetic chain and possibly in a chloroplast respiratory chain. The immediate electron acceptor for the enzyme in this species is believed to be plastoquinone. Couples the redox reaction to proton translocation, and thus conserves the redox energy in a proton gradient. The sequence is that of NAD(P)H-quinone oxidoreductase subunit 5, chloroplastic (ndhF) from Oenothera argillicola (Appalachian evening primrose).